A 531-amino-acid polypeptide reads, in one-letter code: Tyrosine/DOPA decarboxylase 2 (531 aa).

N6-(pyridoxal phosphate)lysine is present on Lys319.

The protein belongs to the group II decarboxylase family. Homodimer. Pyridoxal 5'-phosphate is required as a cofactor. In terms of tissue distribution, predominantly expressed in the roots and stems, while a lower level expression is seen in the sepals and carpels of fully expanded flowers.

It carries out the reaction L-tyrosine + H(+) = tyramine + CO2. The enzyme catalyses L-dopa + H(+) = dopamine + CO2. The catalysed reaction is 5-hydroxy-L-tryptophan + H(+) = serotonin + CO2. Functionally, marginally higher substrate specificity for L-DOPA over L-tyrosine. The polypeptide is Tyrosine/DOPA decarboxylase 2 (TYDC2) (Papaver somniferum (Opium poppy)).